Consider the following 226-residue polypeptide: Endonuclease NucS (226 aa).

Belongs to the NucS endonuclease family.

The protein localises to the cytoplasm. Its function is as follows. Cleaves both 3' and 5' ssDNA extremities of branched DNA structures. The chain is Endonuclease NucS from Mycobacterium tuberculosis (strain ATCC 25618 / H37Rv).